Here is a 532-residue protein sequence, read N- to C-terminus: Flavin-containing monooxygenase 1 (532 aa).

A2 bears the N-acetylalanine mark. Residues 2–510 (AKRVAIVGAG…TRIVQESPTP (509 aa)) lie on the Lumenal side of the membrane. FAD contacts are provided by residues 9–13 (GAGVS), E32, 40–41 (LW), and 61–62 (NS). NADP(+) is bound by residues 60–61 (SN) and 195–198 (SGTD). Residues 511–531 (FASLLKLLSLLALLMAIFLIF) form a helical membrane-spanning segment. Residue L532 is a topological domain, cytoplasmic.

The protein belongs to the FMO family. The cofactor is FAD. In terms of tissue distribution, liver.

It is found in the endoplasmic reticulum membrane. It carries out the reaction hypotaurine + NADPH + O2 + H(+) = taurine + NADP(+) + H2O. The enzyme catalyses hypotaurine + NADH + O2 + H(+) = taurine + NAD(+) + H2O. The catalysed reaction is trimethylamine + NADPH + O2 = trimethylamine N-oxide + NADP(+) + H2O. It catalyses the reaction N,N-dimethylaniline + NADPH + O2 + H(+) = N,N-dimethylaniline N-oxide + NADP(+) + H2O. Its function is as follows. Broad spectrum monooxygenase that catalyzes the oxygenation of a wide variety of nitrogen- and sulfur-containing compounds including xenobiotics. Catalyzes the S-oxygenation of hypotaurine to produce taurine, an organic osmolyte involved in cell volume regulation as well as a variety of cytoprotective and developmental processes. In vitro, catalyzes the N-oxygenation of trimethylamine (TMA) to produce trimethylamine N-oxide (TMAO) and could therefore participate to the detoxification of this compound that is generated by the action of gut microbiota from dietary precursors such as choline, choline containing compounds, betaine or L-carnitine. The protein is Flavin-containing monooxygenase 1 (FMO1) of Canis lupus familiaris (Dog).